The sequence spans 178 residues: Putative adenylate kinase (178 aa).

ATP contacts are provided by G10, G12, K13, S14, and S15. Residues T29–I50 form an NMP region. The tract at residues G94 to E104 is LID. R95 lines the ATP pocket.

This sequence belongs to the adenylate kinase family. AK6 subfamily. Interacts with uS11. Not a structural component of 40S pre-ribosomes, but transiently interacts with them by binding to uS11.

It catalyses the reaction AMP + ATP = 2 ADP. It carries out the reaction ATP + H2O = ADP + phosphate + H(+). Broad-specificity nucleoside monophosphate (NMP) kinase that catalyzes the reversible transfer of the terminal phosphate group between nucleoside triphosphates and monophosphates. Also has ATPase activity. Involved in the late maturation steps of the 30S ribosomal particles, specifically 16S rRNA maturation. While NMP activity is not required for ribosome maturation, ATPase activity is. Associates transiently with small ribosomal subunit protein uS11. ATP hydrolysis breaks the interaction with uS11. May temporarily remove uS11 from the ribosome to enable a conformational change of the ribosomal RNA that is needed for the final maturation step of the small ribosomal subunit. The chain is Putative adenylate kinase from Archaeoglobus fulgidus (strain ATCC 49558 / DSM 4304 / JCM 9628 / NBRC 100126 / VC-16).